The sequence spans 329 residues: Malate dehydrogenase (329 aa).

Position 12–18 (12–18 (GAAGQIG)) interacts with NAD(+). Substrate-binding residues include R93 and R99. Residues N106, Q113, and 130-132 (TGN) contribute to the NAD(+) site. Substrate contacts are provided by N132 and R163. H188 acts as the Proton acceptor in catalysis.

This sequence belongs to the LDH/MDH superfamily. MDH type 2 family.

The enzyme catalyses (S)-malate + NAD(+) = oxaloacetate + NADH + H(+). In terms of biological role, catalyzes the reversible oxidation of malate to oxaloacetate. The sequence is that of Malate dehydrogenase from Mycobacterium avium (strain 104).